Consider the following 665-residue polypeptide: Probable arginine--tRNA ligase, cytoplasmic (665 aa).

Residues 204–206 (SPN), histidine 215, tyrosine 390, aspartate 394, and glutamine 418 each bind L-arginine. Positions 205–216 (PNIAKQMHVGHL) match the 'HIGH' region motif. The interaction with tRNA stretch occupies residues 535-549 (NTAVYLLYTYTRICS).

Belongs to the class-I aminoacyl-tRNA synthetase family.

Its subcellular location is the cytoplasm. The protein resides in the cytosol. The enzyme catalyses tRNA(Arg) + L-arginine + ATP = L-arginyl-tRNA(Arg) + AMP + diphosphate. Its function is as follows. Forms part of a macromolecular complex that catalyzes the attachment of specific amino acids to cognate tRNAs during protein synthesis. The protein is Probable arginine--tRNA ligase, cytoplasmic of Drosophila melanogaster (Fruit fly).